Reading from the N-terminus, the 904-residue chain is NADH-quinone oxidoreductase subunit G (904 aa).

Residues 1-83 form the 2Fe-2S ferredoxin-type domain; the sequence is MATIHVDGKA…GTWISIDDEE (83 aa). 4 residues coordinate [2Fe-2S] cluster: C34, C45, C48, and C67. The region spanning 83 to 122 is the 4Fe-4S His(Cys)3-ligated-type domain; sequence ESKAFRASVVEWLMTNHPHDCPVCEEGGHCHLQDMTVMTG. [4Fe-4S] cluster is bound by residues H99, C103, C106, C112, C151, C154, C157, C201, C228, C231, C235, and C263. In terms of domain architecture, 4Fe-4S Mo/W bis-MGD-type spans 221–277; it reads MQFAPSICHGCSSGCNISPGERYGELRRIENRFNGSVNQYFLCDRGRFGYGYVNRKD.

Belongs to the complex I 75 kDa subunit family. As to quaternary structure, composed of 13 different subunits. Subunits NuoCD, E, F, and G constitute the peripheral sector of the complex. The cofactor is [2Fe-2S] cluster. Requires [4Fe-4S] cluster as cofactor.

The enzyme catalyses a quinone + NADH + 5 H(+)(in) = a quinol + NAD(+) + 4 H(+)(out). In terms of biological role, NDH-1 shuttles electrons from NADH, via FMN and iron-sulfur (Fe-S) centers, to quinones in the respiratory chain. The immediate electron acceptor for the enzyme in this species is believed to be ubiquinone. Couples the redox reaction to proton translocation (for every two electrons transferred, four hydrogen ions are translocated across the cytoplasmic membrane), and thus conserves the redox energy in a proton gradient. The polypeptide is NADH-quinone oxidoreductase subunit G (nuoG) (Pseudomonas putida (strain ATCC 47054 / DSM 6125 / CFBP 8728 / NCIMB 11950 / KT2440)).